Reading from the N-terminus, the 227-residue chain is Cytochrome c oxidase subunit 2 (227 aa).

Over 1–14 (MAYPFQLGLQDASS) the chain is Mitochondrial intermembrane. The chain crosses the membrane as a helical span at residues 15-45 (PIMEELMNFHDHTLMIVFLISSLVLYLMALM). Topologically, residues 46–59 (LSTKLIHTSTMDAQ) are mitochondrial matrix. A helical membrane pass occupies residues 60 to 87 (EVETIWTILPAIILIMIALPSLRILYMM). Residues 88 to 227 (DEINNPILTV…LFENWSMSMT (140 aa)) are Mitochondrial intermembrane-facing. 6 residues coordinate Cu cation: His-161, Cys-196, Glu-198, Cys-200, His-204, and Met-207. Glu-198 serves as a coordination point for Mg(2+).

Belongs to the cytochrome c oxidase subunit 2 family. Component of the cytochrome c oxidase (complex IV, CIV), a multisubunit enzyme composed of 14 subunits. The complex is composed of a catalytic core of 3 subunits MT-CO1, MT-CO2 and MT-CO3, encoded in the mitochondrial DNA, and 11 supernumerary subunits COX4I, COX5A, COX5B, COX6A, COX6B, COX6C, COX7A, COX7B, COX7C, COX8 and NDUFA4, which are encoded in the nuclear genome. The complex exists as a monomer or a dimer and forms supercomplexes (SCs) in the inner mitochondrial membrane with NADH-ubiquinone oxidoreductase (complex I, CI) and ubiquinol-cytochrome c oxidoreductase (cytochrome b-c1 complex, complex III, CIII), resulting in different assemblies (supercomplex SCI(1)III(2)IV(1) and megacomplex MCI(2)III(2)IV(2)). Found in a complex with TMEM177, COA6, COX18, COX20, SCO1 and SCO2. Interacts with TMEM177 in a COX20-dependent manner. Interacts with COX20. Interacts with COX16. Cu cation is required as a cofactor.

The protein resides in the mitochondrion inner membrane. It catalyses the reaction 4 Fe(II)-[cytochrome c] + O2 + 8 H(+)(in) = 4 Fe(III)-[cytochrome c] + 2 H2O + 4 H(+)(out). In terms of biological role, component of the cytochrome c oxidase, the last enzyme in the mitochondrial electron transport chain which drives oxidative phosphorylation. The respiratory chain contains 3 multisubunit complexes succinate dehydrogenase (complex II, CII), ubiquinol-cytochrome c oxidoreductase (cytochrome b-c1 complex, complex III, CIII) and cytochrome c oxidase (complex IV, CIV), that cooperate to transfer electrons derived from NADH and succinate to molecular oxygen, creating an electrochemical gradient over the inner membrane that drives transmembrane transport and the ATP synthase. Cytochrome c oxidase is the component of the respiratory chain that catalyzes the reduction of oxygen to water. Electrons originating from reduced cytochrome c in the intermembrane space (IMS) are transferred via the dinuclear copper A center (CU(A)) of subunit 2 and heme A of subunit 1 to the active site in subunit 1, a binuclear center (BNC) formed by heme A3 and copper B (CU(B)). The BNC reduces molecular oxygen to 2 water molecules using 4 electrons from cytochrome c in the IMS and 4 protons from the mitochondrial matrix. The protein is Cytochrome c oxidase subunit 2 (MT-CO2) of Gerbillus gerbillus (Lesser Egyptian gerbil).